Here is a 578-residue protein sequence, read N- to C-terminus: A-type ATP synthase subunit A (578 aa).

228–235 (GPFGSGKT) contacts ATP.

It belongs to the ATPase alpha/beta chains family. Has multiple subunits with at least A(3), B(3), C, D, E, F, G, I and proteolipid K(x).

It is found in the cell membrane. The enzyme catalyses ATP + H2O + 4 H(+)(in) = ADP + phosphate + 5 H(+)(out). ATP hydrolysis stimulated by sulfite, ethanol, glycerol, magnesium and zinc ions, inhibited by diethylstilbestrol (DES) and less well by N,N-dicyclohexylcarbodiimide (DCCD). In terms of biological role, component of the A-type ATP synthase that produces ATP from ADP in the presence of a proton gradient across the membrane. The A chain is the catalytic subunit. The chain is A-type ATP synthase subunit A from Methanosarcina mazei (strain ATCC BAA-159 / DSM 3647 / Goe1 / Go1 / JCM 11833 / OCM 88) (Methanosarcina frisia).